The sequence spans 257 residues: ADP-dependent (S)-NAD(P)H-hydrate dehydratase (257 aa).

The 257-residue stretch at 1–257 (MGRLQRTLSN…VIERIPDTIR (257 aa)) folds into the YjeF C-terminal domain. Gly-200 lines the AMP pocket. Asp-201 is a (6S)-NADPHX binding site.

It belongs to the NnrD/CARKD family. In terms of assembly, homotetramer. The cofactor is Mg(2+).

The enzyme catalyses (6S)-NADHX + ADP = AMP + phosphate + NADH + H(+). The catalysed reaction is (6S)-NADPHX + ADP = AMP + phosphate + NADPH + H(+). In terms of biological role, catalyzes the dehydration of the S-form of NAD(P)HX at the expense of ADP, which is converted to AMP. Together with NAD(P)HX epimerase, which catalyzes the epimerization of the S- and R-forms, the enzyme allows the repair of both epimers of NAD(P)HX, a damaged form of NAD(P)H that is a result of enzymatic or heat-dependent hydration. This Haloterrigena turkmenica (strain ATCC 51198 / DSM 5511 / JCM 9101 / NCIMB 13204 / VKM B-1734 / 4k) (Halococcus turkmenicus) protein is ADP-dependent (S)-NAD(P)H-hydrate dehydratase.